The chain runs to 845 residues: Aryl hydrocarbon receptor (845 aa).

The propeptide occupies 1-10 (MNSSSASITY). Polar residues predominate over residues 1–10 (MNSSSASITY). Residues 1 to 39 (MNSSSASITYASRKRRKPVQKTVKPVPAEGIKSNPSKRH) form a disordered region. Short sequence motifs (nuclear localization signal) lie at residues 13–16 (RKRR) and 37–42 (KRHRDR). A bHLH domain is found at 27 to 80 (PAEGIKSNPSKRHRDRLNTELDRLASLLPFPQDVVNKLDKLSVLRLSVSYLRAK). Required for maintaining the overall integrity of the AHR:ARNT heterodimer and its transcriptional activity stretches follow at residues 50–82 (LASL…AKSF), 117–125 (LLQALNGFV), and 265–267 (FAI). The short motif at 64-72 (LDKLSVLRL) is the Nuclear export signal element. In terms of domain architecture, PAS 1 spans 110-180 (NLQEGEFLLQ…RQLHWALNPS (71 aa)). One can recognise a PAS 2 domain in the interval 274-341 (PSILEIRTKN…CAEYHIRMIK (68 aa)). In terms of domain architecture, PAC spans 347 to 385 (LIVFRLLTKDNRWTWVQSNARLVYKNGRPDYIIATQRPL). Positions 820-845 (NNTQPTTHLHPSEARPFSDLTSSGFL) are disordered.

In terms of assembly, homodimer. Heterodimer; efficient DNA binding requires dimerization with another bHLH protein. Interacts with ARNT; the heterodimer ARNT:AHR binds to core DNA sequence 5'-TGCGTG-3' within the dioxin response element (DRE) of target gene promoters and activates their transcription. Binds MYBBP1A. Interacts with coactivators including SRC-1, RIP140 and NOCA7, and with the corepressor SMRT. Interacts with NEDD8 and IVNS1ABP. Interacts with BMAL1. Interacts with HSP90AB1. Interacts with TIPARP; leading to mono-ADP-ribosylation of AHR and subsequent inhibition of AHR. In terms of processing, mono-ADP-ribosylated, leading to inhibit transcription activator activity of AHR.

The protein resides in the cytoplasm. It is found in the nucleus. Its function is as follows. Ligand-activated transcription factor that enables cells to adapt to changing conditions by sensing compounds from the environment, diet, microbiome and cellular metabolism, and which plays important roles in development, immunity and cancer. Upon ligand binding, translocates into the nucleus, where it heterodimerizes with ARNT and induces transcription by binding to xenobiotic response elements (XRE). Regulates a variety of biological processes, including angiogenesis, hematopoiesis, drug and lipid metabolism, cell motility and immune modulation. Xenobiotics can act as ligands: upon xenobiotic-binding, activates the expression of multiple phase I and II xenobiotic chemical metabolizing enzyme genes (such as the CYP1A1 gene). Mediates biochemical and toxic effects of halogenated aromatic hydrocarbons. Next to xenobiotics, natural ligands derived from plants, microbiota, and endogenous metabolism are potent AHR agonists. Tryptophan (Trp) derivatives constitute an important class of endogenous AHR ligands. Acts as a negative regulator of anti-tumor immunity: indoles and kynurenic acid generated by Trp catabolism act as ligand and activate AHR, thereby promoting AHR-driven cancer cell motility and suppressing adaptive immunity. Regulates the circadian clock by inhibiting the basal and circadian expression of the core circadian component PER1. Inhibits PER1 by repressing the CLOCK-BMAL1 heterodimer mediated transcriptional activation of PER1. The heterodimer ARNT:AHR binds to core DNA sequence 5'-TGCGTG-3' within the dioxin response element (DRE) of target gene promoters and activates their transcription. The chain is Aryl hydrocarbon receptor (AHR) from Delphinapterus leucas (Beluga whale).